A 93-amino-acid chain; its full sequence is Large ribosomal subunit protein uL23cz/uL23cy (93 aa).

The protein belongs to the universal ribosomal protein uL23 family. As to quaternary structure, part of the 50S ribosomal subunit.

The protein resides in the plastid. It is found in the chloroplast. Functionally, binds to 23S rRNA. The sequence is that of Large ribosomal subunit protein uL23cz/uL23cy (rpl23-A) from Lactuca sativa (Garden lettuce).